The following is a 265-amino-acid chain: Hydroxyethylthiazole kinase (265 aa).

M50 is a binding site for substrate. Positions 125 and 171 each coordinate ATP. G198 lines the substrate pocket.

Belongs to the Thz kinase family. Mg(2+) is required as a cofactor.

It carries out the reaction 5-(2-hydroxyethyl)-4-methylthiazole + ATP = 4-methyl-5-(2-phosphooxyethyl)-thiazole + ADP + H(+). Its pathway is cofactor biosynthesis; thiamine diphosphate biosynthesis; 4-methyl-5-(2-phosphoethyl)-thiazole from 5-(2-hydroxyethyl)-4-methylthiazole: step 1/1. Catalyzes the phosphorylation of the hydroxyl group of 4-methyl-5-beta-hydroxyethylthiazole (THZ). The polypeptide is Hydroxyethylthiazole kinase (Salmonella newport (strain SL254)).